The following is a 245-amino-acid chain: PF03932 family protein CutC (245 aa).

The protein belongs to the CutC family.

The protein resides in the cytoplasm. The chain is PF03932 family protein CutC from Rhizobium meliloti (strain 1021) (Ensifer meliloti).